Consider the following 727-residue polypeptide: E3 ubiquitin-protein ligase LRSAM1 (727 aa).

LRR repeat units follow at residues 30–51, 56–77, 82–103, 105–126, 128–150, and 151–172; these read ADDI…AFAT, QKKV…SCSL, TIKV…MGQL, VLQV…IGNL, QLQT…GELR, and SLRT…LAHV. Residues 227–248 form a disordered region; that stretch reads GAENTQDSPDGPASRFSREEAE. The residue at position 234 (S234) is a Phosphoserine. Coiled coils occupy residues 241–382 and 469–547; these read RFSR…NLRQ and RQIR…QENY. The SAM domain maps to 569 to 632; it reads GMERRLVALL…LRRAQDLLAV (64 aa). Residue S604 is modified to Phosphoserine. Short sequence motifs (PTAP motif) lie at residues 653–656 and 665–668; these read PTAP and PSAP. The RING-type zinc-finger motif lies at 679-714; sequence CVVCLEREAQMVFLTCGHVCCCQQCCQPLRTCPLCR.

Interacts with TSG101. Interacts with PHF23. Interacts with FUS. In terms of processing, ubiquitination promoted by PHF23 leads to proteasomal degradation. Widely expressed.

Its subcellular location is the cytoplasm. It catalyses the reaction S-ubiquitinyl-[E2 ubiquitin-conjugating enzyme]-L-cysteine + [acceptor protein]-L-lysine = [E2 ubiquitin-conjugating enzyme]-L-cysteine + N(6)-ubiquitinyl-[acceptor protein]-L-lysine.. The protein operates within protein modification; protein ubiquitination. E3 ubiquitin-protein ligase that mediates monoubiquitination of TSG101 at multiple sites, leading to inactivate the ability of TSG101 to sort endocytic (EGF receptors) and exocytic (viral proteins) cargos. Bacterial recognition protein that defends the cytoplasm from invasive pathogens. Localizes to several intracellular bacterial pathogens and generates the bacteria-associated ubiquitin signal leading to autophagy-mediated intracellular bacteria degradation (xenophagy). The protein is E3 ubiquitin-protein ligase LRSAM1 of Mus musculus (Mouse).